The sequence spans 419 residues: Protein arginine N-methyltransferase 8-B (419 aa).

The span at 1-14 (MGLRHSSRCLLLRR) shows a compositional bias: basic residues. The tract at residues 1 to 79 (MGLRHSSRCL…HTPHVSALSA (79 aa)) is disordered. Gly-2 is lipidated: N-myristoyl glycine. The span at 33–63 (QHQQQQSISSIPSSQSLQPSPLPKPVTSVHH) shows a compositional bias: low complexity. At Arg-83 the chain carries Omega-N-methylarginine. At Arg-98 the chain carries Asymmetric dimethylarginine. The region spanning 98-402 (RDYYFDSYAH…RDLDFTFELD (305 aa)) is the SAM-dependent MTase PRMT-type domain. Residues His-111, Arg-120, Gly-144, 144–147 (GSGT), Glu-166, and Glu-195 each bind S-adenosyl-L-methionine. Residues Glu-210 and Glu-219 contribute to the active site.

The protein belongs to the class I-like SAM-binding methyltransferase superfamily. Protein arginine N-methyltransferase family. PRMT8 subfamily. In terms of assembly, homodimer. Tetramer; individual homodimers associates to form a homotetramer. Homooctamer; individual homodimers associates to form a homooctamer and homooligomerization is required for proper localization to the cell membrane.

It is found in the cell membrane. The catalysed reaction is L-arginyl-[protein] + S-adenosyl-L-methionine = N(omega)-methyl-L-arginyl-[protein] + S-adenosyl-L-homocysteine + H(+). It catalyses the reaction L-arginyl-[protein] + 2 S-adenosyl-L-methionine = N(omega),N(omega)-dimethyl-L-arginyl-[protein] + 2 S-adenosyl-L-homocysteine + 2 H(+). Its function is as follows. S-adenosyl-L-methionine-dependent and membrane-associated arginine methyltransferase that can both catalyze the formation of omega-N monomethylarginine (MMA) and asymmetrical dimethylarginine (aDMA). The polypeptide is Protein arginine N-methyltransferase 8-B (prmt8b) (Danio rerio (Zebrafish)).